A 1225-amino-acid polypeptide reads, in one-letter code: Chromosome-associated kinesin KIF4 (1225 aa).

Residues 9–338 (IPVRVVRCRP…LRYADRARKI (330 aa)) enclose the Kinesin motor domain. 88 to 95 (GQTGSGKT) contributes to the ATP binding site. Residues 352 to 1003 (ELNHLKQQVQ…LKQKMLLVQV (652 aa)) are a coiled coil. 3 disordered regions span residues 498-520 (QDAA…FTTQ), 717-744 (NKRL…GMEG), and 1006-1047 (GQKL…PTPE). A compositionally biased stretch (polar residues) spans 507–520 (GQVTKRSSDDFTTQ). Residues 719-738 (RLKDALQKQREAADKRKESQ) show a composition bias toward basic and acidic residues. Residues 1004 to 1225 (ASGQKLRRDQ…GCTPIKEEID (222 aa)) form a globular region.

Belongs to the TRAFAC class myosin-kinesin ATPase superfamily. Kinesin family. Chromokinesin subfamily. It depends on [2Fe-2S] cluster as a cofactor. [4Fe-4S] cluster is required as a cofactor. As to expression, expressed in proliferating cells; neuroepithelium of embryos.

Its subcellular location is the nucleus. The protein localises to the chromosome. It localises to the cytoplasm. It is found in the cytoskeleton. Functionally, iron-sulfur (Fe-S) cluster binding motor protein that has a role in chromosome segregation during mitosis. Required for mitotic chromosomal positioning and bipolar spindle stabilization. In Gallus gallus (Chicken), this protein is Chromosome-associated kinesin KIF4 (KIF4).